Here is a 151-residue protein sequence, read N- to C-terminus: Ribosome maturation factor RimP (151 aa).

The protein belongs to the RimP family.

Its subcellular location is the cytoplasm. Required for maturation of 30S ribosomal subunits. In Persephonella marina (strain DSM 14350 / EX-H1), this protein is Ribosome maturation factor RimP.